A 481-amino-acid chain; its full sequence is Aspartyl/glutamyl-tRNA(Asn/Gln) amidotransferase subunit B (481 aa).

It belongs to the GatB/GatE family. GatB subfamily. In terms of assembly, heterotrimer of A, B and C subunits.

It catalyses the reaction L-glutamyl-tRNA(Gln) + L-glutamine + ATP + H2O = L-glutaminyl-tRNA(Gln) + L-glutamate + ADP + phosphate + H(+). The enzyme catalyses L-aspartyl-tRNA(Asn) + L-glutamine + ATP + H2O = L-asparaginyl-tRNA(Asn) + L-glutamate + ADP + phosphate + 2 H(+). Its function is as follows. Allows the formation of correctly charged Asn-tRNA(Asn) or Gln-tRNA(Gln) through the transamidation of misacylated Asp-tRNA(Asn) or Glu-tRNA(Gln) in organisms which lack either or both of asparaginyl-tRNA or glutaminyl-tRNA synthetases. The reaction takes place in the presence of glutamine and ATP through an activated phospho-Asp-tRNA(Asn) or phospho-Glu-tRNA(Gln). This chain is Aspartyl/glutamyl-tRNA(Asn/Gln) amidotransferase subunit B, found in Pseudomonas fluorescens (strain SBW25).